Reading from the N-terminus, the 125-residue chain is MARIASVNIPDNKRLVVSLTYIYGLGSTMAAEICNKAKISRDKKVKVLTDQELIRLRNIIENEYKVEGDLRREVTLNIKKKKDIRCYQGLRHIRKLPVRGQNTHSNARTRKGKAIAIAGKKKTVK.

This sequence belongs to the universal ribosomal protein uS13 family. Part of the 30S ribosomal subunit. Forms a loose heterodimer with protein S19. Forms two bridges to the 50S subunit in the 70S ribosome.

Its function is as follows. Located at the top of the head of the 30S subunit, it contacts several helices of the 16S rRNA. In the 70S ribosome it contacts the 23S rRNA (bridge B1a) and protein L5 of the 50S subunit (bridge B1b), connecting the 2 subunits; these bridges are implicated in subunit movement. Contacts the tRNAs in the A and P-sites. This chain is Small ribosomal subunit protein uS13, found in Rickettsia typhi (strain ATCC VR-144 / Wilmington).